Consider the following 191-residue polypeptide: UPF0669 protein C6orf120 homolog (191 aa).

A signal peptide spans Met-1 to Ala-30. N-linked (GlcNAc...) asparagine glycosylation is present at Asn-53.

This sequence belongs to the UPF0669 family.

The protein resides in the secreted. In terms of biological role, may be involved in induction of apoptosis in CD4(+) T-cells, but not CD8(+) T-cells or hepatocytes. This chain is UPF0669 protein C6orf120 homolog, found in Macaca fascicularis (Crab-eating macaque).